Reading from the N-terminus, the 128-residue chain is Secreted RxLR effector protein RXLR-C09 (128 aa).

An N-terminal signal peptide occupies residues 1-22; the sequence is MRFCLVFIRLAAFVILSGGATS. A RxLR-dEER motif is present at residues 58–75; the sequence is RLLRLNDQADISGHDEER.

The protein belongs to the RxLR effector family.

It is found in the secreted. The protein localises to the host cell membrane. The protein resides in the host nucleus. Functionally, secreted effector that suppresses pattern-triggered immunity (PTI) in plant host. In Plasmopara halstedii (Downy mildew of sunflower), this protein is Secreted RxLR effector protein RXLR-C09.